The chain runs to 291 residues: Elongation factor Ts (291 aa).

An involved in Mg(2+) ion dislocation from EF-Tu region spans residues 78–81; the sequence is TDFV.

This sequence belongs to the EF-Ts family.

The protein resides in the cytoplasm. In terms of biological role, associates with the EF-Tu.GDP complex and induces the exchange of GDP to GTP. It remains bound to the aminoacyl-tRNA.EF-Tu.GTP complex up to the GTP hydrolysis stage on the ribosome. This Ureaplasma urealyticum serovar 10 (strain ATCC 33699 / Western) protein is Elongation factor Ts.